The chain runs to 805 residues: Leucine--tRNA ligase (805 aa).

Positions 39–50 match the 'HIGH' region motif; that stretch reads PYPSGKGLHVGH. The 'KMSKS' region motif lies at 583–587; that stretch reads KMSKS. Lysine 586 contacts ATP.

This sequence belongs to the class-I aminoacyl-tRNA synthetase family.

The protein localises to the cytoplasm. The enzyme catalyses tRNA(Leu) + L-leucine + ATP = L-leucyl-tRNA(Leu) + AMP + diphosphate. In Mycoplasmoides gallisepticum (strain R(low / passage 15 / clone 2)) (Mycoplasma gallisepticum), this protein is Leucine--tRNA ligase.